The primary structure comprises 330 residues: Src kinase-associated phosphoprotein 2-A (330 aa).

The segment at 53 to 77 is disordered; the sequence is QDFQDKAETDDQEENDGFSLPPDAV. One can recognise a PH domain in the interval 105-208; sequence DYLRAGYLEK…WINVIMNARG (104 aa). Residues 228-261 are disordered; sequence SHEEDIYEELPEESEKPVTGSETPKATPVPVNNT. Over residues 247-261 the composition is skewed to polar residues; it reads GSETPKATPVPVNNT. The SH3 domain occupies 268 to 329; it reads DYANFYRGLW…PKAYIIEMYD (62 aa).

Belongs to the SKAP family. In terms of processing, phosphorylated on tyrosines.

It localises to the cytoplasm. Functionally, may be involved in B-cell and macrophage adhesion processes. May play a role in src signaling pathway. This chain is Src kinase-associated phosphoprotein 2-A (skap2-a), found in Xenopus laevis (African clawed frog).